Reading from the N-terminus, the 335-residue chain is MTLPLLGPMSLSGFEHPWFFLFFLVVLGLVALYVIVQMGRHRRMLRFANMELLESVAPKRPSRWRHLPAVLLILSLMSFTVAMAGPTHDVRIPRNRAVVMLVIDVSQSMRATDVAPNRLVAAQEAAKQFADQLTPGINLGLIAYAGTATVLVSPTTNREATKAAIDKLQLADRTATGEGIFTALQAVATVGAVIGGGDEPPPARIVLMSDGKETVPSNPDNPKGAYTAARTAKDQGVPISTVSFGTPYGYVEINDQRQPVPVDDEMLKKIADLSGGDAFTASSLEQLKQVFTNLQEQIGYETIKGDASVGWLRIGSLVLALAALGALLINRRLPN.

Transmembrane regions (helical) follow at residues 18–38 (WFFLFFLVVLGLVALYVIVQM) and 67–87 (LPAVLLILSLMSFTVAMAGPT). The 197-residue stretch at 98-294 (VVMLVIDVSQ…EQLKQVFTNL (197 aa)) folds into the VWFA domain. A helical membrane pass occupies residues 309–329 (VGWLRIGSLVLALAALGALLI).

The protein belongs to the UPF0353 family.

The protein resides in the cell membrane. The polypeptide is UPF0353 protein Mvan_2751 (Mycolicibacterium vanbaalenii (strain DSM 7251 / JCM 13017 / BCRC 16820 / KCTC 9966 / NRRL B-24157 / PYR-1) (Mycobacterium vanbaalenii)).